Reading from the N-terminus, the 548-residue chain is Protein NRT1/ PTR FAMILY 2.4 (548 aa).

The next 12 helical transmembrane spans lie at Thr29–Ile49, Ile65–Phe85, Ile88–Ile108, Ile136–Ala156, Phe172–Val192, Trp200–Ala220, Leu316–Met336, Val354–Asn374, Leu393–Val413, Val429–Ala449, Ser468–Ile488, and Tyr508–Phe528.

Belongs to the major facilitator superfamily. Proton-dependent oligopeptide transporter (POT/PTR) (TC 2.A.17) family. As to expression, strongly expressed in the root stele.

Its subcellular location is the membrane. Functionally, transporter involved in a passive nitrate efflux. This Arabidopsis thaliana (Mouse-ear cress) protein is Protein NRT1/ PTR FAMILY 2.4 (NPF2.4).